Here is an 86-residue protein sequence, read N- to C-terminus: Small ribosomal subunit protein bS20 (86 aa).

Belongs to the bacterial ribosomal protein bS20 family.

Functionally, binds directly to 16S ribosomal RNA. This is Small ribosomal subunit protein bS20 from Mycolicibacterium vanbaalenii (strain DSM 7251 / JCM 13017 / BCRC 16820 / KCTC 9966 / NRRL B-24157 / PYR-1) (Mycobacterium vanbaalenii).